Reading from the N-terminus, the 227-residue chain is UPF0173 metal-dependent hydrolase BCB4264_A4722 (227 aa).

Belongs to the UPF0173 family.

This is UPF0173 metal-dependent hydrolase BCB4264_A4722 from Bacillus cereus (strain B4264).